The chain runs to 253 residues: 1-(5-phosphoribosyl)-5-[(5-phosphoribosylamino)methylideneamino] imidazole-4-carboxamide isomerase (253 aa).

The active-site Proton acceptor is Asp19. Asp141 acts as the Proton donor in catalysis.

Belongs to the HisA/HisF family.

The protein resides in the cytoplasm. It carries out the reaction 1-(5-phospho-beta-D-ribosyl)-5-[(5-phospho-beta-D-ribosylamino)methylideneamino]imidazole-4-carboxamide = 5-[(5-phospho-1-deoxy-D-ribulos-1-ylimino)methylamino]-1-(5-phospho-beta-D-ribosyl)imidazole-4-carboxamide. It participates in amino-acid biosynthesis; L-histidine biosynthesis; L-histidine from 5-phospho-alpha-D-ribose 1-diphosphate: step 4/9. The chain is 1-(5-phosphoribosyl)-5-[(5-phosphoribosylamino)methylideneamino] imidazole-4-carboxamide isomerase from Rhodopirellula baltica (strain DSM 10527 / NCIMB 13988 / SH1).